Here is a 95-residue protein sequence, read N- to C-terminus: Acylphosphatase (95 aa).

Positions 7-95 (RLTAWVLGTV…PKGEVGFRTR (89 aa)) constitute an Acylphosphatase-like domain. Residues Arg22 and Asn40 contribute to the active site.

This sequence belongs to the acylphosphatase family.

It carries out the reaction an acyl phosphate + H2O = a carboxylate + phosphate + H(+). This is Acylphosphatase (acyP) from Corynebacterium diphtheriae (strain ATCC 700971 / NCTC 13129 / Biotype gravis).